The following is a 559-amino-acid chain: Frizzled-5 (559 aa).

A signal peptide spans 1–26 (MGSFRSGVFALSFVVLLLDYFAPAQA). At 27–220 (ASKAIVCQEI…QPYFTQDEKM (194 aa)) the chain is on the extracellular side. The region spanning 28–149 (SKAIVCQEIT…GDPDTLCMYY (122 aa)) is the FZ domain. Intrachain disulfides connect C33/C94, C41/C87, C78/C116, C105/C146, and C109/C133. Residue N47 is glycosylated (N-linked (GlcNAc...) asparagine). An N-linked (GlcNAc...) asparagine glycan is attached at N150. The helical transmembrane segment at 221–241 (FVTFWIGLWSILCFISTFTTV) threads the bilayer. Over 242 to 257 (ATFLIDMERFRYPERP) the chain is Cytoplasmic. The chain crosses the membrane as a helical span at residues 258–278 (IIFLSACYLFVSIGYVVRLIV). At 279–301 (GHENVACNKDHIHYETTGPALCT) the chain is on the extracellular side. Residues 302–322 (IVFLLIYFFGMASSIWWVILT) traverse the membrane as a helical segment. Residues 323 to 343 (FTWFLAAGMKWGNEAIASYSQ) are Cytoplasmic-facing. A helical transmembrane segment spans residues 344–364 (YFHMAAWLIPSVKSIAVLALS). The Extracellular portion of the chain corresponds to 365 to 387 (SVDGDPVAGICYVGNQNLDNLRG). A helical transmembrane segment spans residues 388–408 (FVLAPLVVYLFSGTMFLLAGF). The Cytoplasmic segment spans residues 409–434 (VSLFRIRSVIKQGGTKTDKLEKLMIR). A helical membrane pass occupies residues 435–455 (IGIFSVLYTVPATIVVACYIY). Topologically, residues 456 to 483 (EQHYREHWEKTHNCSCPGDKQRYRPDYA) are extracellular. N-linked (GlcNAc...) asparagine glycosylation occurs at N468. A helical membrane pass occupies residues 484-504 (VFMLKYLMCLVVGITSGVWIW). The Cytoplasmic segment spans residues 505–559 (SGKTLESWKRFTGRCCRNSKPINASAYSEASRALTPRTGLSNLTLPHKQVPLSHV). Residues 507–512 (KTLESW) carry the Lys-Thr-X-X-X-Trp motif, mediates interaction with the PDZ domain of Dvl family members motif. A PDZ-binding motif is present at residues 557 to 559 (SHV).

It belongs to the G-protein coupled receptor Fz/Smo family. Expressed in retina.

It is found in the cell membrane. The protein resides in the golgi apparatus membrane. Receptor for Wnt proteins that functions in the canonical Wnt/beta-catenin signaling pathway. The canonical Wnt/beta-catenin signaling pathway leads to the activation of disheveled proteins, inhibition of GSK-3 kinase, nuclear accumulation of beta-catenin and activation of Wnt target genes. A second signaling pathway involving PKC and calcium fluxes has been seen for some family members, but it is not yet clear if it represents a distinct pathway or if it can be integrated in the canonical pathway, as PKC seems to be required for Wnt-mediated inactivation of GSK-3 kinase. Both pathways seem to involve interactions with G-proteins. May be involved in transduction and intercellular transmission of polarity information during tissue morphogenesis and/or in differentiated tissues. In Xenopus laevis (African clawed frog), this protein is Frizzled-5 (fzd5).